A 464-amino-acid polypeptide reads, in one-letter code: Cysteine--tRNA ligase (464 aa).

Position 28 (Cys28) interacts with Zn(2+). Residues 30-40 (VTVYDFCHIGH) carry the 'HIGH' region motif. Zn(2+)-binding residues include Cys209, His234, and Glu238. The 'KMSKS' region signature appears at 266–270 (KMSKS). ATP is bound at residue Lys269.

Belongs to the class-I aminoacyl-tRNA synthetase family. Monomer. It depends on Zn(2+) as a cofactor.

It is found in the cytoplasm. The catalysed reaction is tRNA(Cys) + L-cysteine + ATP = L-cysteinyl-tRNA(Cys) + AMP + diphosphate. The protein is Cysteine--tRNA ligase (cysS) of Buchnera aphidicola subsp. Acyrthosiphon pisum (strain APS) (Acyrthosiphon pisum symbiotic bacterium).